Consider the following 253-residue polypeptide: Vitamin B12 import ATP-binding protein BtuD (253 aa).

An ABC transporter domain is found at 4 to 236; that stretch reads LQLSNVSVDT…NILSEVFEVD (233 aa). Position 32–39 (32–39) interacts with ATP; it reads GPNGAGKS.

The protein belongs to the ABC transporter superfamily. Vitamin B12 importer (TC 3.A.1.13.1) family. As to quaternary structure, the complex is composed of two ATP-binding proteins (BtuD), two transmembrane proteins (BtuC) and a solute-binding protein (BtuF).

It is found in the cell inner membrane. The enzyme catalyses an R-cob(III)alamin(out) + ATP + H2O = an R-cob(III)alamin(in) + ADP + phosphate + H(+). Functionally, part of the ABC transporter complex BtuCDF involved in vitamin B12 import. Responsible for energy coupling to the transport system. The sequence is that of Vitamin B12 import ATP-binding protein BtuD from Yersinia enterocolitica serotype O:8 / biotype 1B (strain NCTC 13174 / 8081).